A 1083-amino-acid polypeptide reads, in one-letter code: Ubiquitin carboxyl-terminal hydrolase 28 (1083 aa).

A disordered region spans residues 60–82; it reads DQRVKEPSHDTAATEPSEVEESA. S67 carries the phosphoserine modification. Residues 97–116 enclose the UIM domain; sequence DNKDDLQAAIALSLLESPNI. K99 is covalently cross-linked (Glycyl lysine isopeptide (Lys-Gly) (interchain with G-Cter in SUMO2)). Residues 162-656 form the USP domain; that stretch reads VGLKNVGNTC…SAYCLMYIND (495 aa). C171 functions as the Nucleophile in the catalytic mechanism. S376 is subject to Phosphoserine. The segment at 483 to 539 is disordered; it reads DLTAKESSSPKSCSQNAEGSFSSPEDALPNSEVMNGPFTSPHSSLEMPAPPPAPRTV. Positions 487–505 are enriched in polar residues; it reads KESSSPKSCSQNAEGSFSS. Position 556 is a phosphoserine (S556). H606 acts as the Proton acceptor in catalysis. The interval 703–728 is disordered; that stretch reads EEQSCKIPQMESSPNSSSQDFSTSQE. Residues 714–728 show a composition bias toward low complexity; sequence SSPNSSSQDFSTSQE. S720 is modified (phosphoserine). The residue at position 1054 (T1054) is a Phosphothreonine.

Belongs to the peptidase C19 family. USP28 subfamily. As to quaternary structure, interacts with ZNF304. Interacts with PRKD1. Interacts with TP53BP1. Interacts with FBXW7; following DNA damage, dissociates from FBXW7 leading to degradation of MYC. Post-translationally, degraded upon nickel ion level or hypoxia exposure. In terms of processing, phosphorylated upon DNA damage at Ser-67 and Ser-720, by ATM or ATR. Phosphorylated by PRKD1.

Its subcellular location is the nucleus. It localises to the nucleoplasm. It carries out the reaction Thiol-dependent hydrolysis of ester, thioester, amide, peptide and isopeptide bonds formed by the C-terminal Gly of ubiquitin (a 76-residue protein attached to proteins as an intracellular targeting signal).. Its function is as follows. Deubiquitinase involved in DNA damage response checkpoint and MYC proto-oncogene stability. Involved in DNA damage induced apoptosis by specifically deubiquitinating proteins of the DNA damage pathway such as CLSPN. Also involved in G2 DNA damage checkpoint, by deubiquitinating CLSPN, and preventing its degradation by the anaphase promoting complex/cyclosome (APC/C). In contrast, it does not deubiquitinate PLK1. Specifically deubiquitinates MYC in the nucleoplasm, leading to prevent MYC degradation by the proteasome: acts by specifically interacting with FBXW7 (FBW7alpha) in the nucleoplasm and counteracting ubiquitination of MYC by the SCF(FBXW7) complex. Deubiquitinates ZNF304, hence preventing ZNF304 degradation by the proteasome and leading to the activated KRAS-mediated promoter hypermethylation and transcriptional silencing of tumor suppressor genes (TSGs) in a subset of colorectal cancers (CRC) cells. This Rattus norvegicus (Rat) protein is Ubiquitin carboxyl-terminal hydrolase 28 (Usp28).